The chain runs to 780 residues: Chloride channel protein CLC-b (780 aa).

The interval 1 to 28 (MVEEDLNQIGGNSNYNGEGGDPESNTLN) is disordered. Helical transmembrane passes span 87 to 107 (TLACLVGLFTGLIATLINLAV), 130 to 150 (GLMVLVGANLGLTLVASVLCV), 177 to 197 (FGATTMIVKIVGSIGAVAAGL), 205 to 225 (LVHIGSCIASLLGQGGTDNHR), 247 to 267 (GSAAGVCAAFRSPVGGVLFAL), 277 to 297 (ALLWRTFFSTAVVVVVLREFI), 327 to 347 (VTDIIPVMLIGVIGGILGSLY), 370 to 390 (VLLSLTVSLFTSVCLYGLPFL), 452 to 472 (MGSLWIFFVLYCILGLFTFGI), 477 to 497 (GLFLPIILMGAAYGRMLGAAM), 509 to 529 (AVLGAAALMAGSMRMTVSLCV), and 530 to 550 (IFLELTNNLLLLPITMIVLLI). CBS domains lie at 594–663 (AKPP…FLTE) and 708–770 (TNTT…AFPL). Residues 735–755 (HLLIVPKIQASGMCPVVGILT) form a helical membrane-spanning segment.

Belongs to the chloride channel (TC 2.A.49) family. In terms of assembly, homodimer. Interacts with PP2A5. As to expression, broadly expressed in the plant.

It is found in the membrane. Functionally, voltage-gated chloride channel. In Arabidopsis thaliana (Mouse-ear cress), this protein is Chloride channel protein CLC-b (CLC-B).